Here is an 890-residue protein sequence, read N- to C-terminus: Translation initiation factor IF-2 (890 aa).

The segment at 45–304 (LIDHLNQKNS…LQQGFQKPAQ (260 aa)) is disordered. Over residues 67 to 81 (STLNIPGTGGKSKSV) the composition is skewed to polar residues. The segment covering 92 to 217 (VKRDPQEAER…RMAEENKWTD (126 aa)) has biased composition (basic and acidic residues). A compositionally biased stretch (basic residues) spans 252-266 (GRGRNAKAARPKKGN). Over residues 267-280 (KHAESKADREEARA) the composition is skewed to basic and acidic residues. The tr-type G domain occupies 389 to 558 (PRAPVVTIMG…LLQAEVLELK (170 aa)). Positions 398-405 (GHVDHGKT) are G1. Position 398 to 405 (398 to 405 (GHVDHGKT)) interacts with GTP. Residues 423–427 (GITQH) are G2. Positions 444-447 (DTPG) are G3. GTP is bound by residues 444-448 (DTPGH) and 498-501 (NKID). Positions 498-501 (NKID) are G4. The G5 stretch occupies residues 534-536 (SAK). Lysine 808 is subject to N6-acetyllysine.

This sequence belongs to the TRAFAC class translation factor GTPase superfamily. Classic translation factor GTPase family. IF-2 subfamily.

Its subcellular location is the cytoplasm. Its function is as follows. One of the essential components for the initiation of protein synthesis. Protects formylmethionyl-tRNA from spontaneous hydrolysis and promotes its binding to the 30S ribosomal subunits. Also involved in the hydrolysis of GTP during the formation of the 70S ribosomal complex. This chain is Translation initiation factor IF-2, found in Escherichia coli (strain 55989 / EAEC).